The following is a 389-amino-acid chain: Lipid-A-disaccharide synthase (389 aa).

Belongs to the LpxB family.

It catalyses the reaction a lipid X + a UDP-2-N,3-O-bis[(3R)-3-hydroxyacyl]-alpha-D-glucosamine = a lipid A disaccharide + UDP + H(+). The protein operates within bacterial outer membrane biogenesis; LPS lipid A biosynthesis. Its function is as follows. Condensation of UDP-2,3-diacylglucosamine and 2,3-diacylglucosamine-1-phosphate to form lipid A disaccharide, a precursor of lipid A, a phosphorylated glycolipid that anchors the lipopolysaccharide to the outer membrane of the cell. The polypeptide is Lipid-A-disaccharide synthase (Paraburkholderia phytofirmans (strain DSM 17436 / LMG 22146 / PsJN) (Burkholderia phytofirmans)).